Reading from the N-terminus, the 261-residue chain is Carnitinyl-CoA dehydratase (261 aa).

Catalysis depends on Glu111, which acts as the Nucleophile. Glu131 (proton acceptor) is an active-site residue.

It belongs to the enoyl-CoA hydratase/isomerase family.

It catalyses the reaction (R)-carnitinyl-CoA = crotonobetainyl-CoA + H2O. The protein operates within amine and polyamine metabolism; carnitine metabolism. Functionally, catalyzes the reversible dehydration of L-carnitinyl-CoA to crotonobetainyl-CoA. In Salmonella paratyphi C (strain RKS4594), this protein is Carnitinyl-CoA dehydratase.